A 253-amino-acid polypeptide reads, in one-letter code: Small ribosomal subunit protein eS4 (253 aa).

The 72-residue stretch at 43 to 114 (LPLLLIVRNV…YPVKFFKLHP (72 aa)) folds into the S4 RNA-binding domain.

Belongs to the eukaryotic ribosomal protein eS4 family.

The chain is Small ribosomal subunit protein eS4 (rps4e) from Aeropyrum pernix (strain ATCC 700893 / DSM 11879 / JCM 9820 / NBRC 100138 / K1).